Consider the following 1040-residue polypeptide: Multidrug resistance protein MdtB (1040 aa).

Transmembrane regions (helical) follow at residues 16 to 36 (FIMR…AGII), 347 to 367 (LMMA…NIPA), 369 to 389 (IIPG…MVFL), 396 to 416 (LTLM…IVVI), 440 to 460 (IGFT…PLLF), 472 to 492 (FAIT…TLTP), 537 to 557 (WLTL…WVFI), 863 to 883 (LGST…VLGI), 888 to 908 (FIHP…ALLA), 911 to 931 (IAGS…IGIV), 968 to 988 (ILMT…STGV), and 998 to 1018 (IGMV…TPVI).

Belongs to the resistance-nodulation-cell division (RND) (TC 2.A.6) family. MdtB subfamily. Part of a tripartite efflux system composed of MdtA, MdtB and MdtC. MdtB forms a heteromultimer with MdtC.

Its subcellular location is the cell inner membrane. Functionally, the MdtABC tripartite complex confers resistance against novobiocin and deoxycholate. This Escherichia coli O45:K1 (strain S88 / ExPEC) protein is Multidrug resistance protein MdtB.